A 103-amino-acid chain; its full sequence is Small ribosomal subunit protein uS10 (103 aa).

It belongs to the universal ribosomal protein uS10 family. Part of the 30S ribosomal subunit.

Involved in the binding of tRNA to the ribosomes. The polypeptide is Small ribosomal subunit protein uS10 (Sulfurovum sp. (strain NBC37-1)).